Consider the following 78-residue polypeptide: Acyl carrier protein (78 aa).

The 76-residue stretch at 2 to 77 folds into the Carrier domain; it reads STIEERVKKI…AAIDYIEAAN (76 aa). Ser-37 carries the O-(pantetheine 4'-phosphoryl)serine modification.

It belongs to the acyl carrier protein (ACP) family. 4'-phosphopantetheine is transferred from CoA to a specific serine of apo-ACP by AcpS. This modification is essential for activity because fatty acids are bound in thioester linkage to the sulfhydryl of the prosthetic group.

It localises to the cytoplasm. The protein operates within lipid metabolism; fatty acid biosynthesis. Its function is as follows. Carrier of the growing fatty acid chain in fatty acid biosynthesis. This is Acyl carrier protein from Edwardsiella ictaluri (strain 93-146).